We begin with the raw amino-acid sequence, 179 residues long: Large ribosomal subunit protein uL5 (179 aa).

It belongs to the universal ribosomal protein uL5 family. In terms of assembly, part of the 50S ribosomal subunit; part of the 5S rRNA/L5/L18/L25 subcomplex. Contacts the 5S rRNA and the P site tRNA. Forms a bridge to the 30S subunit in the 70S ribosome.

Its function is as follows. This is one of the proteins that bind and probably mediate the attachment of the 5S RNA into the large ribosomal subunit, where it forms part of the central protuberance. In the 70S ribosome it contacts protein S13 of the 30S subunit (bridge B1b), connecting the 2 subunits; this bridge is implicated in subunit movement. Contacts the P site tRNA; the 5S rRNA and some of its associated proteins might help stabilize positioning of ribosome-bound tRNAs. This is Large ribosomal subunit protein uL5 from Edwardsiella ictaluri (strain 93-146).